The chain runs to 283 residues: Urease accessory protein UreD 2 (283 aa).

Positions 1-11 (MGRRAPDRLDR) are enriched in basic and acidic residues. The tract at residues 1 to 30 (MGRRAPDRLDRGVTTTSPRTQAPPQAGRGV) is disordered. Residues 13 to 23 (VTTTSPRTQAP) are compositionally biased toward polar residues.

This sequence belongs to the UreD family. As to quaternary structure, ureD, UreF and UreG form a complex that acts as a GTP-hydrolysis-dependent molecular chaperone, activating the urease apoprotein by helping to assemble the nickel containing metallocenter of UreC. The UreE protein probably delivers the nickel.

It is found in the cytoplasm. Its function is as follows. Required for maturation of urease via the functional incorporation of the urease nickel metallocenter. The protein is Urease accessory protein UreD 2 of Saccharopolyspora erythraea (strain ATCC 11635 / DSM 40517 / JCM 4748 / NBRC 13426 / NCIMB 8594 / NRRL 2338).